The sequence spans 1214 residues: Spliceosome-associated protein 130 A (1214 aa).

The disordered stretch occupies residues 817–848 (AGGVGENGNGNADQMENGADDEDKEDPLSDEQ). The segment covering 834–845 (GADDEDKEDPLS) has biased composition (acidic residues).

It belongs to the RSE1 family. As to quaternary structure, identified in the spliceosome C complex. Component of the U11/U12 snRNPs that are part of the U12-type spliceosome. Component of splicing factor SF3B complex. As to expression, expressed at low levels in roots, leaves, inflorescence and, to a lower extent, in siliques.

The protein resides in the nucleus. In terms of biological role, subunit of the splicing factor SF3B required for 'A' complex assembly formed by the stable binding of U2 snRNP to the branchpoint sequence (BPS) in pre-mRNA. Sequence independent binding of SF3A/SF3B complex upstream of the branch site is essential, it may anchor U2 snRNP to the pre-mRNA. May also be involved in the assembly of the 'E' complex. Also belongs to the minor U12-dependent spliceosome, which is involved in the splicing of rare class of nuclear pre-mRNA intron. Required for pollen and ovule development, especially during the transition from microspore to the bicellular stage in pollen development. Involved in the accumulation of QRT1 and QRT3. This is Spliceosome-associated protein 130 A from Arabidopsis thaliana (Mouse-ear cress).